Consider the following 654-residue polypeptide: Chaperone protein DnaK (654 aa).

Thr-205 carries the phosphothreonine; by autocatalysis modification. The tract at residues 592 to 654 is disordered; the sequence is ELERQMQQIG…EVEILDDKKP (63 aa). The span at 608–621 shows a compositional bias: polar residues; that stretch reads AGQSETQSTGPGSY. Low complexity predominate over residues 622 to 636; it reads QESSNQSSQHQTNNN.

Belongs to the heat shock protein 70 family.

Its function is as follows. Acts as a chaperone. This Protochlamydia amoebophila (strain UWE25) protein is Chaperone protein DnaK.